A 647-amino-acid polypeptide reads, in one-letter code: Threonine--tRNA ligase (647 aa).

Positions 1–61 (MINITFPDGA…TEDGSIEIVT (61 aa)) constitute a TGS domain. The segment at 242–540 (DHRKLGKELD…LIENYKGAFP (299 aa)) is catalytic. Cys336, His387, and His517 together coordinate Zn(2+).

This sequence belongs to the class-II aminoacyl-tRNA synthetase family. In terms of assembly, homodimer. It depends on Zn(2+) as a cofactor.

It is found in the cytoplasm. It catalyses the reaction tRNA(Thr) + L-threonine + ATP = L-threonyl-tRNA(Thr) + AMP + diphosphate + H(+). In terms of biological role, catalyzes the attachment of threonine to tRNA(Thr) in a two-step reaction: L-threonine is first activated by ATP to form Thr-AMP and then transferred to the acceptor end of tRNA(Thr). Also edits incorrectly charged L-seryl-tRNA(Thr). The chain is Threonine--tRNA ligase from Streptococcus pneumoniae (strain ATCC 700669 / Spain 23F-1).